Consider the following 288-residue polypeptide: ATP synthase gamma chain (288 aa).

Belongs to the ATPase gamma chain family. As to quaternary structure, F-type ATPases have 2 components, CF(1) - the catalytic core - and CF(0) - the membrane proton channel. CF(1) has five subunits: alpha(3), beta(3), gamma(1), delta(1), epsilon(1). CF(0) has three main subunits: a, b and c.

The protein localises to the cell inner membrane. Functionally, produces ATP from ADP in the presence of a proton gradient across the membrane. The gamma chain is believed to be important in regulating ATPase activity and the flow of protons through the CF(0) complex. This chain is ATP synthase gamma chain, found in Acidithiobacillus ferrooxidans (strain ATCC 23270 / DSM 14882 / CIP 104768 / NCIMB 8455) (Ferrobacillus ferrooxidans (strain ATCC 23270)).